The sequence spans 360 residues: NADP-dependent alcohol dehydrogenase 6 (360 aa).

Cysteine 46 contributes to the Zn(2+) binding site. 2 residues coordinate NADP(+): glycine 47 and histidine 51. Zn(2+) contacts are provided by histidine 68, cysteine 100, cysteine 103, cysteine 106, and cysteine 114. Serine 131 is modified (phosphoserine). Cysteine 163 is a Zn(2+) binding site. Positions 188, 190, 191, 210, 211, 215, 250, 252, 255, 256, 275, 277, 298, 299, 301, and 348 each coordinate NADP(+). Serine 359 carries the phosphoserine modification.

The protein belongs to the zinc-containing alcohol dehydrogenase family. As to quaternary structure, homodimer. Zn(2+) serves as cofactor.

It is found in the cytoplasm. The protein localises to the nucleus. The enzyme catalyses a primary alcohol + NADP(+) = an aldehyde + NADPH + H(+). The catalysed reaction is (E)-cinnamyl alcohol + NADP(+) = (E)-cinnamaldehyde + NADPH + H(+). It carries out the reaction hexan-1-ol + NADP(+) = hexanal + NADPH + H(+). It catalyses the reaction 3-methylbutanol + NADP(+) = 3-methylbutanal + NADPH + H(+). The enzyme catalyses S-nitroso-CoA + NADPH + H(+) = sulfinamide-CoA + NADP(+). Functionally, NADP-dependent, medium-chain alcohol dehydrogenase with a broad substrate specificity. Aldehydes exhibited 50-12000 times higher catalytic efficiency than the corresponding alcohols, therefore the major function of the enzyme is as an aldehyde reductase. The enzyme is active towards aromatic and aliphatic (linear and branched-chain) aldehydes. The enzyme is very active towards aromatic aldehydes, such as cinnamaldehyde, benzaldehyde and substituted benzaldehydes, such as veratraldehyde and panisaldehyde. It exhibits low activity towards substituted cinnamaldehydes, such as coniferaldehyde and sinapaldehyde. The enzyme has no activity with ketones, such as acetone or cyclohexanone. For the reverse reaction, linear and branched-chain primary alcohols are substrates, whereas very low activity is found with secondary alcohols, such as butan-2-ol. The enzyme may be physiologically involved in several steps of the lignin degradation pathway, initiated by other microorganisms, in the synthesis of fusel alcohols, products derived from the aminoacidic metabolism, and in the homeostasis of NADP(H). Has the ability to reduce 5-hydroxymethyl furfural (HMF), a furan derivative which is formed during the hydrolysis of lignocellulosic materials, to 5-hydroxymethylfurfuryl alcohol, thereby alleviating the inhibition of the fermentation of lignocellulose hydrolysates by HMF during fuel ethanol production. Also acts as an inhibitor of protein S-nitrosylation by mediating degradation of S-nitroso-coenzyme A (S-nitroso-CoA), a cofactor required to S-nitrosylate proteins. This is NADP-dependent alcohol dehydrogenase 6 from Saccharomyces cerevisiae (strain ATCC 204508 / S288c) (Baker's yeast).